The following is a 155-amino-acid chain: Probable Brix domain-containing ribosomal biogenesis protein (155 aa).

Residues 1 to 155 (MLITSSRKPS…KNYRKMVMSE (155 aa)) enclose the Brix domain.

Its function is as follows. Probably involved in the biogenesis of the ribosome. The chain is Probable Brix domain-containing ribosomal biogenesis protein from Methanococcoides burtonii (strain DSM 6242 / NBRC 107633 / OCM 468 / ACE-M).